We begin with the raw amino-acid sequence, 158 residues long: Transcription elongation factor GreA (158 aa).

Residues 45–72 (AEYHAAREQQSFIEGRIKQLEGELSHAE) adopt a coiled-coil conformation.

It belongs to the GreA/GreB family.

Functionally, necessary for efficient RNA polymerase transcription elongation past template-encoded arresting sites. The arresting sites in DNA have the property of trapping a certain fraction of elongating RNA polymerases that pass through, resulting in locked ternary complexes. Cleavage of the nascent transcript by cleavage factors such as GreA or GreB allows the resumption of elongation from the new 3'terminus. GreA releases sequences of 2 to 3 nucleotides. This chain is Transcription elongation factor GreA, found in Xylella fastidiosa (strain M12).